The following is an 872-amino-acid chain: Chaperone protein ClpB 2 (872 aa).

In terms of domain architecture, Clp R spans 6-148 (PNQFTEKAWE…KNIIKQVRGS (143 aa)). Repeat regions lie at residues 9–73 (FTEK…IQRQ) and 85–148 (LGRS…VRGS). The segment at 161–342 (QSLEKYGRDL…RRFQQVYVDQ (182 aa)) is NBD1. 208–215 (GEPGVGKT) provides a ligand contact to ATP. The linker stretch occupies residues 343–551 (PSVEDTISIL…IAEIISKWTG (209 aa)). A coiled-coil region spans residues 393-527 (IDLVDEAAAR…TERELSQTQG (135 aa)). An NBD2 region spans residues 561 to 772 (EKEKLLHLED…RIDEVIIFHS (212 aa)). ATP is bound at residue 611–618 (GPTGVGKT). The segment at 773–872 (LDKKELRQIV…SRLPVEVFSS (100 aa)) is C-terminal.

The protein belongs to the ClpA/ClpB family. As to quaternary structure, homohexamer. The oligomerization is ATP-dependent.

It localises to the cytoplasm. In terms of biological role, part of a stress-induced multi-chaperone system, it is involved in the recovery of the cell from heat-induced damage, in cooperation with DnaK, DnaJ and GrpE. Acts before DnaK, in the processing of protein aggregates. Protein binding stimulates the ATPase activity; ATP hydrolysis unfolds the denatured protein aggregates, which probably helps expose new hydrophobic binding sites on the surface of ClpB-bound aggregates, contributing to the solubilization and refolding of denatured protein aggregates by DnaK. The polypeptide is Chaperone protein ClpB 2 (clpB2) (Nostoc sp. (strain PCC 7120 / SAG 25.82 / UTEX 2576)).